We begin with the raw amino-acid sequence, 63 residues long: uncharacterized protein (63 aa).

This is an uncharacterized protein from Acidianus bottle-shaped virus (isolate Italy/Pozzuoli) (ABV).